The sequence spans 625 residues: Probable potassium transport system protein Kup 2 (625 aa).

12 helical membrane-spanning segments follow: residues leucine 15 to phenylalanine 35, isoleucine 52 to valine 72, glycine 98 to leucine 118, leucine 134 to phenylalanine 154, isoleucine 164 to phenylalanine 184, isoleucine 203 to valine 223, tryptophan 246 to leucine 266, phenylalanine 284 to isoleucine 304, valine 336 to phenylalanine 356, alanine 365 to alanine 385, phenylalanine 394 to isoleucine 414, and leucine 417 to threonine 437.

The protein belongs to the HAK/KUP transporter (TC 2.A.72) family.

The protein localises to the cell inner membrane. The catalysed reaction is K(+)(in) + H(+)(in) = K(+)(out) + H(+)(out). In terms of biological role, transport of potassium into the cell. Likely operates as a K(+):H(+) symporter. The sequence is that of Probable potassium transport system protein Kup 2 from Legionella pneumophila subsp. pneumophila (strain Philadelphia 1 / ATCC 33152 / DSM 7513).